A 120-amino-acid chain; its full sequence is MSFYESVFIVRQDVSLNDIDKIVDDFSKIIKDNNGAIVKKEYWGLRALAYKIGNHKKGHYYLLGLDTTPAVKQELERKMKLNENIIRFLTQKVDSISNEPSPILKNQSTENTPVIDVTAN.

The segment covering 97–112 (SNEPSPILKNQSTENT) has biased composition (polar residues). The disordered stretch occupies residues 97-120 (SNEPSPILKNQSTENTPVIDVTAN).

It belongs to the bacterial ribosomal protein bS6 family.

In terms of biological role, binds together with bS18 to 16S ribosomal RNA. The polypeptide is Small ribosomal subunit protein bS6 (Rickettsia bellii (strain RML369-C)).